We begin with the raw amino-acid sequence, 201 residues long: MAKRVTGPEIEKLIQLLAKVPGLGPRSARRAALHLIKKKDQLLGPLSHAMGEAYDKVKICSRCGNVDTVDPCTVCTDGHRDQSVIIVVEDVADLWALERAAAMNAAYHVLGGVLSPLDGVGPDDLNIRGLIQRVGEGGVREIIIAVNATVEGQTTAHYITDQLAGLEVKITRLAHGVPVGGELDYLDEGTLTAALRARTAI.

Residues 60–75 (CSRCGNVDTVDPCTVC) form a C4-type zinc finger. The 96-residue stretch at 83–178 (SVIIVVEDVA…KITRLAHGVP (96 aa)) folds into the Toprim domain.

The protein belongs to the RecR family.

Its function is as follows. May play a role in DNA repair. It seems to be involved in an RecBC-independent recombinational process of DNA repair. It may act with RecF and RecO. This Rhizobium rhizogenes (strain K84 / ATCC BAA-868) (Agrobacterium radiobacter) protein is Recombination protein RecR.